Reading from the N-terminus, the 155-residue chain is Putative pre-16S rRNA nuclease (155 aa).

It belongs to the YqgF nuclease family.

It is found in the cytoplasm. Its function is as follows. Could be a nuclease involved in processing of the 5'-end of pre-16S rRNA. In Wolbachia sp. subsp. Drosophila simulans (strain wRi), this protein is Putative pre-16S rRNA nuclease.